The chain runs to 1637 residues: Serine/threonine-protein kinase Genghis Khan (1637 aa).

The 270-residue stretch at 100–369 (FDILKIIGRG…IQDFMDHPWF (270 aa)) folds into the Protein kinase domain. ATP-binding positions include 106–114 (IGRGAFGEV) and Lys129. Asp224 (proton acceptor) is an active-site residue. Positions 370–440 (VGIDWKNIRQ…SLTSSSTLDS (71 aa)) constitute an AGC-kinase C-terminal domain. Coiled coils occupy residues 473–587 (VDSV…EDAV), 643–688 (SEKL…LKYT), and 839–881 (DELS…DLQK). Residues 538–575 (RNQKQKLSRQVRDKEEELDGAMQKNDSLRNELRKSDKT) form a disordered region. A compositionally biased stretch (basic and acidic residues) spans 563–575 (DSLRNELRKSDKT). Thr895 is subject to Phosphothreonine. Residues 952-971 (NNKDHSSMKEASVSDLSREE) form a disordered region. The Phorbol-ester/DAG-type zinc-finger motif lies at 989 to 1039 (IHQFLVRTFSSPTKCNHCTSLMVGLTRQGVVCEICGFACHTICCQKVPTTC). In terms of domain architecture, PH spans 1059-1177 (GTAYEGYVKV…WVIALGELHR (119 aa)). One can recognise a CNH domain in the interval 1203-1489 (IRNALCSVII…LPLNNLGNVV (287 aa)). Residues 1546-1559 (ISAPTNFNHISHMG) form the CRIB domain. Ser1584 carries the post-translational modification Phosphoserine. Residues 1611 to 1637 (DYGNDNIISRTPSPMASSFMDGLSNND) are disordered. Polar residues predominate over residues 1616–1626 (NIISRTPSPMA).

It belongs to the protein kinase superfamily. AGC Ser/Thr protein kinase family. DMPK subfamily. In terms of assembly, interacts tightly with GTP-bound but not GDP-bound Cdc42.

The enzyme catalyses L-seryl-[protein] + ATP = O-phospho-L-seryl-[protein] + ADP + H(+). It catalyses the reaction L-threonyl-[protein] + ATP = O-phospho-L-threonyl-[protein] + ADP + H(+). Its function is as follows. Acts as a downstream effector for the regulation of actin polymerization by Cdc42. The chain is Serine/threonine-protein kinase Genghis Khan (gek) from Drosophila melanogaster (Fruit fly).